Consider the following 533-residue polypeptide: Flavin-containing monooxygenase 5 (533 aa).

Arginine 5 is modified (dimethylated arginine). FAD contacts are provided by residues 10–14 (GAGAS), glutamate 33, and 41–42 (LW). The residue at position 54 (serine 54) is a Phosphoserine. At tyrosine 56 the chain carries Phosphotyrosine. Serine 58 is modified (phosphoserine). 62 to 63 (NT) is an FAD binding site. An NADP(+)-binding site is contributed by 196-199 (SGGD). The residue at position 280 (serine 280) is a Phosphoserine. A Phosphothreonine modification is found at threonine 284. Serine 401 carries the post-translational modification Phosphoserine. A helical transmembrane segment spans residues 513–533 (MMTMGKFMLAIAFLAIAVVYF).

It belongs to the FMO family. FAD serves as cofactor. Kidney and liver.

The protein resides in the microsome membrane. It localises to the endoplasmic reticulum membrane. It carries out the reaction N,N-dimethylaniline + NADPH + O2 + H(+) = N,N-dimethylaniline N-oxide + NADP(+) + H2O. It catalyses the reaction NADPH + O2 + H(+) = H2O2 + NADP(+). The catalysed reaction is heptan-2-one + NADPH + O2 + H(+) = pentyl acetate + NADP(+) + H2O. The enzyme catalyses octan-3-one + NADPH + O2 + H(+) = pentyl propanoate + NADP(+) + H2O. It carries out the reaction octan-3-one + NADPH + O2 + H(+) = ethyl hexanoate + NADP(+) + H2O. It catalyses the reaction hexan-3-one + NADPH + O2 + H(+) = ethyl butanoate + NADP(+) + H2O. The catalysed reaction is hexan-3-one + NADPH + O2 + H(+) = propyl propanoate + NADP(+) + H2O. The enzyme catalyses heptan-4-one + NADPH + O2 + H(+) = propyl butanoate + NADP(+) + H2O. It carries out the reaction (2E)-geranial + NADPH + O2 + H(+) = (1E)-2,6-dimethylhepta-1,5-dien-1-yl formate + NADP(+) + H2O. It catalyses the reaction sulcatone + NADPH + O2 + H(+) = 4-methylpent-3-en-1-yl acetate + NADP(+) + H2O. Its function is as follows. Acts as a Baeyer-Villiger monooxygenase on a broad range of substrates. Catalyzes the insertion of an oxygen atom into a carbon-carbon bond adjacent to a carbonyl, which converts ketones to esters. Active on diverse carbonyl compounds, whereas soft nucleophiles are mostly non- or poorly reactive. In contrast with other forms of FMO it is non- or poorly active on 'classical' substrates such as drugs, pesticides, and dietary components containing soft nucleophilic heteroatoms. Able to oxidize drug molecules bearing a carbonyl group on an aliphatic chain, such as nabumetone and pentoxifylline. Also, in the absence of substrates, shows slow but yet significant NADPH oxidase activity. Acts as a positive modulator of cholesterol biosynthesis as well as glucose homeostasis, promoting metabolic aging via pleiotropic effects. The protein is Flavin-containing monooxygenase 5 (FMO5) of Oryctolagus cuniculus (Rabbit).